Consider the following 664-residue polypeptide: Methionine--tRNA ligase (664 aa).

The 'HIGH' region motif lies at 15–25; it reads YYPSGKAHIGH. Positions 310 to 314 match the 'KMSKS' region motif; the sequence is KMSKS. Residue lysine 313 coordinates ATP. Residues 563–664 enclose the tRNA-binding domain; that stretch reads DFDKIDLRVA…SALPNGAKVK (102 aa).

Belongs to the class-I aminoacyl-tRNA synthetase family. MetG type 2B subfamily. As to quaternary structure, homodimer.

It localises to the cytoplasm. The catalysed reaction is tRNA(Met) + L-methionine + ATP = L-methionyl-tRNA(Met) + AMP + diphosphate. In terms of biological role, is required not only for elongation of protein synthesis but also for the initiation of all mRNA translation through initiator tRNA(fMet) aminoacylation. The chain is Methionine--tRNA ligase (metG) from Listeria monocytogenes serovar 1/2a (strain ATCC BAA-679 / EGD-e).